The chain runs to 917 residues: Translation initiation factor IF-2 (917 aa).

A disordered region spans residues 241–312 (EEAKKGTLHK…GGWRSGGGRK (72 aa)). The segment covering 252 to 262 (AKAEGAEDKKK) has biased composition (basic and acidic residues). Over residues 274–283 (SSETSSTWQE) the composition is skewed to polar residues. The span at 298 to 308 (TSGGVGGWRSG) shows a compositional bias: gly residues. Residues 415-582 (PRPPVVTVMG…NVLLQAEILE (168 aa)) enclose the tr-type G domain. The G1 stretch occupies residues 424 to 431 (GHVDHGKT). Residue 424–431 (GHVDHGKT) participates in GTP binding. A G2 region spans residues 449–453 (GITQH). The G3 stretch occupies residues 470-473 (DTPG). GTP contacts are provided by residues 470 to 474 (DTPGH) and 524 to 527 (NKID). A G4 region spans residues 524-527 (NKID). The interval 560–562 (SAK) is G5.

Belongs to the TRAFAC class translation factor GTPase superfamily. Classic translation factor GTPase family. IF-2 subfamily.

Its subcellular location is the cytoplasm. One of the essential components for the initiation of protein synthesis. Protects formylmethionyl-tRNA from spontaneous hydrolysis and promotes its binding to the 30S ribosomal subunits. Also involved in the hydrolysis of GTP during the formation of the 70S ribosomal complex. The protein is Translation initiation factor IF-2 of Polynucleobacter necessarius subsp. necessarius (strain STIR1).